A 546-amino-acid chain; its full sequence is Chaperonin GroEL (546 aa).

ATP contacts are provided by residues 30–33 (TLGP), K51, 87–91 (DGTTT), G415, 479–481 (NAA), and D495.

This sequence belongs to the chaperonin (HSP60) family. Forms a cylinder of 14 subunits composed of two heptameric rings stacked back-to-back. Interacts with the co-chaperonin GroES.

Its subcellular location is the cytoplasm. The enzyme catalyses ATP + H2O + a folded polypeptide = ADP + phosphate + an unfolded polypeptide.. Together with its co-chaperonin GroES, plays an essential role in assisting protein folding. The GroEL-GroES system forms a nano-cage that allows encapsulation of the non-native substrate proteins and provides a physical environment optimized to promote and accelerate protein folding. This chain is Chaperonin GroEL, found in Bordetella avium (strain 197N).